The chain runs to 76 residues: uncharacterized protein (76 aa).

Residues 40-60 form a helical membrane-spanning segment; sequence IVLNLVVLVGVVPLTWMFLGQ.

The protein localises to the membrane. This is an uncharacterized protein from Dictyostelium discoideum (Social amoeba).